The chain runs to 1744 residues: DNA-directed RNA polymerase I subunit RPA1 (1744 aa).

Residues cysteine 56, cysteine 69, and histidine 72 each contribute to the Zn(2+) site. Positions 597, 599, and 601 each coordinate Mg(2+). The segment at 953-965 (PAEYTIHAMAGRD) is bridging helix. The interval 1333 to 1484 (VPREKESGDG…RDGTDWGGTS (152 aa)) is disordered. 2 stretches are compositionally biased toward gly residues: residues 1341 to 1354 (DGSG…GGSG) and 1366 to 1376 (DDGGGPLGGTF). Residues 1464-1478 (RDAEDGGEMQDRDGT) are compositionally biased toward basic and acidic residues.

Belongs to the RNA polymerase beta' chain family. Component of the RNA polymerase I (Pol I) complex consisting of at least 13 subunits. Phosphorylated.

It localises to the nucleus. The protein resides in the nucleolus. It catalyses the reaction RNA(n) + a ribonucleoside 5'-triphosphate = RNA(n+1) + diphosphate. Functionally, DNA-dependent RNA polymerase catalyzes the transcription of DNA into RNA using the four ribonucleoside triphosphates as substrates. Largest and catalytic core component of RNA polymerase I which synthesizes ribosomal RNA precursors. Forms the polymerase active center together with the second largest subunit. A single stranded DNA template strand of the promoter is positioned within the central active site cleft of Pol I. A bridging helix emanates from RPA1 and crosses the cleft near the catalytic site and is thought to promote translocation of Pol I by acting as a ratchet that moves the RNA-DNA hybrid through the active site by switching from straight to bent conformations at each step of nucleotide addition. The polypeptide is DNA-directed RNA polymerase I subunit RPA1 (TRP11) (Trypanosoma brucei brucei).